We begin with the raw amino-acid sequence, 577 residues long: Arginine--tRNA ligase (577 aa).

A 'HIGH' region motif is present at residues 122–132 (PNVAKEMHVGH).

This sequence belongs to the class-I aminoacyl-tRNA synthetase family. In terms of assembly, monomer.

The protein resides in the cytoplasm. The enzyme catalyses tRNA(Arg) + L-arginine + ATP = L-arginyl-tRNA(Arg) + AMP + diphosphate. This is Arginine--tRNA ligase from Salmonella enteritidis PT4 (strain P125109).